Reading from the N-terminus, the 170-residue chain is Peptide deformylase (170 aa).

Fe cation contacts are provided by Cys93 and His135. Residue Glu136 is part of the active site. A Fe cation-binding site is contributed by His139.

This sequence belongs to the polypeptide deformylase family. It depends on Fe(2+) as a cofactor.

It catalyses the reaction N-terminal N-formyl-L-methionyl-[peptide] + H2O = N-terminal L-methionyl-[peptide] + formate. Its function is as follows. Removes the formyl group from the N-terminal Met of newly synthesized proteins. Requires at least a dipeptide for an efficient rate of reaction. N-terminal L-methionine is a prerequisite for activity but the enzyme has broad specificity at other positions. The chain is Peptide deformylase from Syntrophobacter fumaroxidans (strain DSM 10017 / MPOB).